Reading from the N-terminus, the 72-residue chain is UPF0270 protein KPN78578_37030 (72 aa).

It belongs to the UPF0270 family.

The polypeptide is UPF0270 protein KPN78578_37030 (Klebsiella pneumoniae subsp. pneumoniae (strain ATCC 700721 / MGH 78578)).